The chain runs to 342 residues: Ketol-acid reductoisomerase (NADP(+)) (342 aa).

The 180-residue stretch at 2–181 (VKVYYNGDIK…GGARAGVLET (180 aa)) folds into the KARI N-terminal Rossmann domain. Residues 25 to 28 (YGSQ), Arg-48, Ser-52, and 82 to 85 (DEQQ) each bind NADP(+). His-107 is an active-site residue. Gly-133 is an NADP(+) binding site. The KARI C-terminal knotted domain occupies 182–327 (TFKEETETDL…RQLREMMPFV (146 aa)). Residues Asp-190, Glu-194, Glu-226, and Glu-230 each coordinate Mg(2+). Substrate is bound at residue Ser-251.

The protein belongs to the ketol-acid reductoisomerase family. Mg(2+) is required as a cofactor.

The catalysed reaction is (2R)-2,3-dihydroxy-3-methylbutanoate + NADP(+) = (2S)-2-acetolactate + NADPH + H(+). It carries out the reaction (2R,3R)-2,3-dihydroxy-3-methylpentanoate + NADP(+) = (S)-2-ethyl-2-hydroxy-3-oxobutanoate + NADPH + H(+). It participates in amino-acid biosynthesis; L-isoleucine biosynthesis; L-isoleucine from 2-oxobutanoate: step 2/4. The protein operates within amino-acid biosynthesis; L-valine biosynthesis; L-valine from pyruvate: step 2/4. Functionally, involved in the biosynthesis of branched-chain amino acids (BCAA). Catalyzes an alkyl-migration followed by a ketol-acid reduction of (S)-2-acetolactate (S2AL) to yield (R)-2,3-dihydroxy-isovalerate. In the isomerase reaction, S2AL is rearranged via a Mg-dependent methyl migration to produce 3-hydroxy-3-methyl-2-ketobutyrate (HMKB). In the reductase reaction, this 2-ketoacid undergoes a metal-dependent reduction by NADPH to yield (R)-2,3-dihydroxy-isovalerate. This is Ketol-acid reductoisomerase (NADP(+)) from Bacillus velezensis (strain DSM 23117 / BGSC 10A6 / LMG 26770 / FZB42) (Bacillus amyloliquefaciens subsp. plantarum).